The primary structure comprises 496 residues: MHAKSLTELRAALAAKECSAVELAQLYLKRIEAARDLNAFVHVDADLTLAQAKAADAELARGAGGALTGLPIAHKDVFVTRGWHSTAGSKMLANYESPFDATVVARLQAAGMVTLGKTNMDEFAMGSSNENSAFGAVKNPWDTNAVPGGSSGGSSAAVAARLAPAATGTDTGGSIRQPASFAGVTGIKPTYGRVSRYGMIAFASSLDQGGPMAQSASDCALLLNAMAGFDERDSTSLEREDEDFTRHLGQPWAAGNDAGKPLAGLRIGLPNEYFGDGLADDVRATIDAALKQYEALGATLVPVSLPKTELSIPVYYVIAPAEASSNLSRFDGVRFGHRAAQYGDLLDMYKKSRAEGFGPEVKRRILVGAYVLSHGYYDAYYLQAQKIRRIIANDFQEAFKSCDVIMGPASPTVAWDLGSKGDDPVQMYLADIYTLSVSLAGLPGMSVPCGFGAGANAKRPVGLQIIGNYFNEARMLQVADAFQRATDWHKQVPAGV.

Residues Lys-75 and Ser-150 each act as charge relay system in the active site. The active-site Acyl-ester intermediate is the Ser-174.

Belongs to the amidase family. GatA subfamily. In terms of assembly, heterotrimer of A, B and C subunits.

The enzyme catalyses L-glutamyl-tRNA(Gln) + L-glutamine + ATP + H2O = L-glutaminyl-tRNA(Gln) + L-glutamate + ADP + phosphate + H(+). Allows the formation of correctly charged Gln-tRNA(Gln) through the transamidation of misacylated Glu-tRNA(Gln) in organisms which lack glutaminyl-tRNA synthetase. The reaction takes place in the presence of glutamine and ATP through an activated gamma-phospho-Glu-tRNA(Gln). The protein is Glutamyl-tRNA(Gln) amidotransferase subunit A of Burkholderia lata (strain ATCC 17760 / DSM 23089 / LMG 22485 / NCIMB 9086 / R18194 / 383).